Consider the following 384-residue polypeptide: PqqA peptide cyclase (384 aa).

Positions 5-220 (VGLPLWLLAE…TNEYREKLKA (216 aa)) constitute a Radical SAM core domain. [4Fe-4S] cluster-binding residues include Cys-19, Cys-23, and Cys-26.

Belongs to the radical SAM superfamily. PqqE family. As to quaternary structure, interacts with PqqD. The interaction is necessary for activity of PqqE. The cofactor is [4Fe-4S] cluster.

The catalysed reaction is [PQQ precursor protein] + S-adenosyl-L-methionine = E-Y cross-linked-[PQQ precursor protein] + 5'-deoxyadenosine + L-methionine + H(+). Its pathway is cofactor biosynthesis; pyrroloquinoline quinone biosynthesis. Its function is as follows. Catalyzes the cross-linking of a glutamate residue and a tyrosine residue in the PqqA protein as part of the biosynthesis of pyrroloquinoline quinone (PQQ). This Acinetobacter baumannii (strain ACICU) protein is PqqA peptide cyclase.